The chain runs to 156 residues: SsrA-binding protein (156 aa).

Belongs to the SmpB family.

It localises to the cytoplasm. In terms of biological role, required for rescue of stalled ribosomes mediated by trans-translation. Binds to transfer-messenger RNA (tmRNA), required for stable association of tmRNA with ribosomes. tmRNA and SmpB together mimic tRNA shape, replacing the anticodon stem-loop with SmpB. tmRNA is encoded by the ssrA gene; the 2 termini fold to resemble tRNA(Ala) and it encodes a 'tag peptide', a short internal open reading frame. During trans-translation Ala-aminoacylated tmRNA acts like a tRNA, entering the A-site of stalled ribosomes, displacing the stalled mRNA. The ribosome then switches to translate the ORF on the tmRNA; the nascent peptide is terminated with the 'tag peptide' encoded by the tmRNA and targeted for degradation. The ribosome is freed to recommence translation, which seems to be the essential function of trans-translation. This Clostridium botulinum (strain Alaska E43 / Type E3) protein is SsrA-binding protein.